We begin with the raw amino-acid sequence, 461 residues long: Bifunctional protein GlmU (461 aa).

Residues 1 to 232 form a pyrophosphorylase region; sequence MNLQIIILAA…SFEVQGINNR (232 aa). UDP-N-acetyl-alpha-D-glucosamine contacts are provided by residues 8–11, Lys22, Gln73, and 78–79; these read LAAG and GT. A Mg(2+)-binding site is contributed by Asp102. UDP-N-acetyl-alpha-D-glucosamine-binding residues include Gly142, Glu157, and Asn230. Residue Asn230 coordinates Mg(2+). The interval 233–253 is linker; the sequence is QQLQQLERTWQQRAANQLMEK. Residues 254–461 form an N-acetyltransferase region; it reads GATLADANRF…WKRPVKRERD (208 aa). The UDP-N-acetyl-alpha-D-glucosamine site is built by Arg336 and Lys354. The active-site Proton acceptor is the His366. UDP-N-acetyl-alpha-D-glucosamine is bound by residues Tyr369 and Asn380. Acetyl-CoA is bound by residues Ala383, 389–390, Ser408, and Ala426; that span reads NY.

This sequence in the N-terminal section; belongs to the N-acetylglucosamine-1-phosphate uridyltransferase family. In the C-terminal section; belongs to the transferase hexapeptide repeat family. Homotrimer. Mg(2+) is required as a cofactor.

Its subcellular location is the cytoplasm. It catalyses the reaction alpha-D-glucosamine 1-phosphate + acetyl-CoA = N-acetyl-alpha-D-glucosamine 1-phosphate + CoA + H(+). It carries out the reaction N-acetyl-alpha-D-glucosamine 1-phosphate + UTP + H(+) = UDP-N-acetyl-alpha-D-glucosamine + diphosphate. Its pathway is nucleotide-sugar biosynthesis; UDP-N-acetyl-alpha-D-glucosamine biosynthesis; N-acetyl-alpha-D-glucosamine 1-phosphate from alpha-D-glucosamine 6-phosphate (route II): step 2/2. The protein operates within nucleotide-sugar biosynthesis; UDP-N-acetyl-alpha-D-glucosamine biosynthesis; UDP-N-acetyl-alpha-D-glucosamine from N-acetyl-alpha-D-glucosamine 1-phosphate: step 1/1. It participates in bacterial outer membrane biogenesis; LPS lipid A biosynthesis. In terms of biological role, catalyzes the last two sequential reactions in the de novo biosynthetic pathway for UDP-N-acetylglucosamine (UDP-GlcNAc). The C-terminal domain catalyzes the transfer of acetyl group from acetyl coenzyme A to glucosamine-1-phosphate (GlcN-1-P) to produce N-acetylglucosamine-1-phosphate (GlcNAc-1-P), which is converted into UDP-GlcNAc by the transfer of uridine 5-monophosphate (from uridine 5-triphosphate), a reaction catalyzed by the N-terminal domain. This is Bifunctional protein GlmU from Legionella pneumophila (strain Paris).